A 45-amino-acid chain; its full sequence is Conotoxin reg3.12 (45 aa).

The propeptide occupies 1-31 (DQPVERHAGNKRHLNPTIRRAMIIDANRREK). 3 disulfide bridges follow: cysteine 32-cysteine 44, cysteine 33-cysteine 42, and cysteine 38-cysteine 45.

The protein belongs to the conotoxin M superfamily. As to expression, expressed by the venom duct.

The protein resides in the secreted. In Conus regius (Crown cone), this protein is Conotoxin reg3.12.